The chain runs to 520 residues: Sterile alpha motif domain-containing protein 3 (520 aa).

Positions 4 to 71 (WSVDQVCKWL…KYKQGNQELK (68 aa)) constitute an SAM domain. Residues 67 to 104 (NQELKPTGGPADTSTLTPAQAAPEHEQNPSPTSHGDQT) form a disordered region. Over residues 94 to 104 (NPSPTSHGDQT) the composition is skewed to polar residues.

The sequence is that of Sterile alpha motif domain-containing protein 3 (Samd3) from Mus musculus (Mouse).